Here is a 289-residue protein sequence, read N- to C-terminus: Pyridoxal kinase PdxY (289 aa).

Substrate-binding positions include serine 9 and 44-45; that span reads TQ. Residues aspartate 112, alanine 144, glutamate 149, and lysine 182 each coordinate ATP. Aspartate 225 is a binding site for substrate.

The protein belongs to the pyridoxine kinase family. PdxY subfamily. As to quaternary structure, homodimer. It depends on Mg(2+) as a cofactor.

It carries out the reaction pyridoxal + ATP = pyridoxal 5'-phosphate + ADP + H(+). The protein operates within cofactor metabolism; pyridoxal 5'-phosphate salvage; pyridoxal 5'-phosphate from pyridoxal: step 1/1. Pyridoxal kinase involved in the salvage pathway of pyridoxal 5'-phosphate (PLP). Catalyzes the phosphorylation of pyridoxal to PLP. The protein is Pyridoxal kinase PdxY of Aliivibrio fischeri (strain ATCC 700601 / ES114) (Vibrio fischeri).